The sequence spans 590 residues: Putative ferric-chelate reductase 1 (590 aa).

The chain crosses the membrane as a helical span at residues 2-22; the sequence is NPLGLFLIYLYTCALTPVSGY. Residues 12 to 179 enclose the Reelin domain; that stretch reads YTCALTPVSG…APKIPSSTIP (168 aa). The DOMON domain occupies 217 to 330; sequence ECFFLSFRKD…RSYFIFLADG (114 aa). Positions 334 to 533 constitute a Cytochrome b561 domain; the sequence is DGLLYRHHRQ…VFVDLLLEAH (200 aa). Residues 371-391 traverse the membrane as a helical segment; the sequence is LHGAMMFIAWMTTVSIGVIIA. 2 residues coordinate heme b: His372 and His413. Transmembrane regions (helical) follow at residues 416–436 and 445–465; these read LMIT…IYRG and HPHL…LAVF. A heme b-binding site is contributed by His445. The N-linked (GlcNAc...) asparagine glycan is linked to Asn478. His481 contacts heme b. 3 helical membrane passes run 482 to 502, 517 to 537, and 567 to 587; these read WATG…GMDL, IGFV…GFCL, and IVMT…LAAI.

Belongs to the FRRS1 family. It depends on heme b as a cofactor.

It is found in the membrane. In terms of biological role, putative ferric-chelate reductases reduce Fe(3+) to Fe(2+) before its transport from the endosome to the cytoplasm. This chain is Putative ferric-chelate reductase 1 (frrs1), found in Xenopus laevis (African clawed frog).